Reading from the N-terminus, the 232-residue chain is tRNA (guanine-N(1)-)-methyltransferase (232 aa).

S-adenosyl-L-methionine-binding positions include glycine 111 and 131-136; that span reads IGDYIL.

Belongs to the RNA methyltransferase TrmD family. In terms of assembly, homodimer.

The protein localises to the cytoplasm. It catalyses the reaction guanosine(37) in tRNA + S-adenosyl-L-methionine = N(1)-methylguanosine(37) in tRNA + S-adenosyl-L-homocysteine + H(+). Its function is as follows. Specifically methylates guanosine-37 in various tRNAs. The polypeptide is tRNA (guanine-N(1)-)-methyltransferase (Bartonella henselae (strain ATCC 49882 / DSM 28221 / CCUG 30454 / Houston 1) (Rochalimaea henselae)).